A 263-amino-acid chain; its full sequence is Lens fiber major intrinsic protein (263 aa).

Residues 1 to 12 (MWELRSASFWRA) lie on the Cytoplasmic side of the membrane. The helical transmembrane segment at 13–30 (IFAEFFATLFYVFFGLGA) threads the bilayer. At 31 to 40 (SLRWAPGPLH) the chain is on the extracellular side. Residues 41 to 59 (VLQVALAFGLALATLVQAV) form a helical membrane-spanning segment. At 60-63 (GHIS) the chain is on the cytoplasmic side. The discontinuously helical intramembrane region spans 64–76 (GAHVNPAVTFAFL). An NPA 1 motif is present at residues 68 to 70 (NPA). The Cytoplasmic segment spans residues 77 to 85 (VGSQMSLLR). A helical transmembrane segment spans residues 86 to 106 (AICYVVAQLLGAVAGAAVLYS). Residues 107-126 (VTPPAVRGNLALNTLHPGVS) are Extracellular-facing. A helical membrane pass occupies residues 127 to 147 (VGQATIVEIFLTLQFVLCIFA). Residues 148–157 (TYDERRNGRL) lie on the Cytoplasmic side of the membrane. Residues 158–175 (GSVALAVGFSLTLGHLFG) form a helical membrane-spanning segment. At 176–177 (MY) the chain is on the extracellular side. The discontinuously helical intramembrane region spans 178–193 (YTGAGMNPARSFAPAI). Positions 184-186 (NPA) match the NPA 2 motif. At 194–200 (LTRNFTN) the chain is on the extracellular side. The chain crosses the membrane as a helical span at residues 201–218 (HWVYWVGPVIGAGLGSLL). The Cytoplasmic segment spans residues 219-263 (YDFLLFPRLKSVSERLSILKGTRPSESNGQPEVTGEPVELKTQAL). The tract at residues 227 to 237 (LKSVSERLSIL) is interaction with CALM. A phosphoserine mark is found at serine 235, serine 243, and serine 245. A disordered region spans residues 240 to 263 (TRPSESNGQPEVTGEPVELKTQAL).

The protein belongs to the MIP/aquaporin (TC 1.A.8) family. Homotetramer; each monomer provides an independent water pore. Two homotetramers on opposing membranes can dimerize, forming a cell-cell junction. Interacts with CALM; the calcium-calmodulin/CALM complex interacts with the cytoplasmic domains of two aquaporins, leading to channel closure. Interacts with BFSP1 (via C-terminus); prevents calcium-dependent inhibition of the water channel activity. In terms of processing, subject to partial proteolytic cleavage in the eye lens core. Partial proteolysis promotes interactions between tetramers from adjoining membranes. Post-translationally, fatty acylated at Met-1 and Lys-238. The acyl modifications, in decreasing order of ion abundance, are: oleoyl (C18:1) &gt; palmitoyl (C16:0) &gt; stearoyl (C18:0) &gt; eicosenoyl (C20:1) &gt; dihomo-gamma-linolenoyl (C20:3) &gt; palmitoleoyl (C16:1) &gt; eicosadienoyl (C20:2). As to expression, detected in eye lens (at protein level).

Its subcellular location is the cell membrane. The protein resides in the cell junction. The catalysed reaction is H2O(in) = H2O(out). With respect to regulation, the water channel activity is inhibited by calcium through calmodulin/CALM. Aquaporins form homotetrameric transmembrane channels, with each monomer independently mediating water transport across the plasma membrane along its osmotic gradient. Specifically expressed in lens fiber cells, this aquaporin is crucial for maintaining lens water homeostasis and transparency. Beyond water permeability, it also acts as a cell-to-cell adhesion molecule, forming thin junctions between lens fiber cells that are essential for maintaining the ordered structure and transparency of the lens. The chain is Lens fiber major intrinsic protein from Ovis aries (Sheep).